A 161-amino-acid chain; its full sequence is Urease accessory protein UreE (161 aa).

Belongs to the UreE family.

The protein resides in the cytoplasm. Functionally, involved in urease metallocenter assembly. Binds nickel. Probably functions as a nickel donor during metallocenter assembly. In Pseudarthrobacter chlorophenolicus (strain ATCC 700700 / DSM 12829 / CIP 107037 / JCM 12360 / KCTC 9906 / NCIMB 13794 / A6) (Arthrobacter chlorophenolicus), this protein is Urease accessory protein UreE.